A 517-amino-acid polypeptide reads, in one-letter code: DNA primase DnaG (517 aa).

One can recognise a Toprim domain in the interval 171-257 (DAIIILEGRA…CVEDLVQKEV (87 aa)). Mg(2+) is bound by residues Glu177, Asp219, and Asp221.

Belongs to the archaeal DnaG primase family. Forms a ternary complex with MCM helicase and DNA. Component of the archaeal exosome complex. Mg(2+) is required as a cofactor.

The enzyme catalyses ssDNA + n NTP = ssDNA/pppN(pN)n-1 hybrid + (n-1) diphosphate.. Functionally, RNA polymerase that catalyzes the synthesis of short RNA molecules used as primers for DNA polymerase during DNA replication. Also part of the exosome, which is a complex involved in RNA degradation. Acts as a poly(A)-binding protein that enhances the interaction between heteromeric, adenine-rich transcripts and the exosome. This is DNA primase DnaG from Methanosarcina barkeri (strain Fusaro / DSM 804).